Consider the following 379-residue polypeptide: D-threonine aldolase (379 aa).

Lys59 carries the post-translational modification N6-(pyridoxal phosphate)lysine.

It belongs to the DSD1 family. Pyridoxal 5'-phosphate is required as a cofactor. Mn(2+) serves as cofactor. It depends on Co(2+) as a cofactor. The cofactor is Ni(2+). Requires Mg(2+) as cofactor.

The catalysed reaction is D-threonine = acetaldehyde + glycine. It catalyses the reaction D-allo-threonine = acetaldehyde + glycine. With respect to regulation, inhibited by the carbonyl reagents hydroxylamine, phenylhydrazine and semicarbazide. Inhibited by the chelating agent EDTA. Inhibited by the sulfhydryl reagent p-chloromercuribenzoic acid, and by sodium cyanide. Inhibited by iodoacetate, Ag(2)SO(4), HgCl(2) and CdCl(2). Competitively inhibited by beta-hydroxyaspartate and O-phospho-DL-threonine. In terms of biological role, catalyzes the reversible cleavage of D-threonine or D-allothreonine into glycine and acetaldehyde. Can also cleave D-beta-phenylserine, D-beta-hydroxy-alpha-aminovaleric acid, D-beta-3,4-dihydroxyphenylserine and D-beta-3,4-methylenedioxyphenylserine into glycine and the corresponding aldehyde compounds. Inactive towards D-serine, beta-hydroxyaspartate and O-phospho-DL-threonine. The polypeptide is D-threonine aldolase (Arthrobacter sp).